The primary structure comprises 155 residues: Conopressin/neurophysin (155 aa).

Positions methionine 1–alanine 26 are cleaved as a signal peptide. An intrachain disulfide couples cysteine 27 to cysteine 32. A Glycine amide modification is found at glycine 35. 7 disulfide bridges follow: cysteine 50-cysteine 94, cysteine 53-cysteine 67, cysteine 61-cysteine 84, cysteine 68-cysteine 74, cysteine 101-cysteine 115, cysteine 109-cysteine 127, and cysteine 116-cysteine 121. A glycan (N-linked (GlcNAc...) asparagine) is linked at asparagine 88.

This sequence belongs to the vasopressin/oxytocin family. In terms of processing, seven disulfide bonds are present in neurophysin.

Its subcellular location is the secreted. This is Conopressin/neurophysin from Lymnaea stagnalis (Great pond snail).